Reading from the N-terminus, the 456-residue chain is 26S proteasome non-ATPase regulatory subunit 12 (456 aa).

N-acetylalanine is present on A2. K92 participates in a covalent cross-link: Glycyl lysine isopeptide (Lys-Gly) (interchain with G-Cter in SUMO1); alternate. Residue K92 forms a Glycyl lysine isopeptide (Lys-Gly) (interchain with G-Cter in SUMO2); alternate linkage. An N6-acetyllysine mark is found at K221 and K368. Residues 242–420 enclose the PCI domain; the sequence is SICKHYRAIY…GIINFQRPKD (179 aa).

It belongs to the proteasome subunit p55 family. Component of the 19S proteasome regulatory particle complex. The 26S proteasome consists of a 20S core particle (CP) and two 19S regulatory subunits (RP). The regulatory particle is made of a lid composed of 9 subunits including PSMD12, a base containing 6 ATPases and few additional components. Interacts with ERCC6.

Component of the 26S proteasome, a multiprotein complex involved in the ATP-dependent degradation of ubiquitinated proteins. This complex plays a key role in the maintenance of protein homeostasis by removing misfolded or damaged proteins, which could impair cellular functions, and by removing proteins whose functions are no longer required. Therefore, the proteasome participates in numerous cellular processes, including cell cycle progression, apoptosis, or DNA damage repair. The polypeptide is 26S proteasome non-ATPase regulatory subunit 12 (PSMD12) (Pongo abelii (Sumatran orangutan)).